A 234-amino-acid chain; its full sequence is UPF0502 protein Reut_B4455 (234 aa).

The protein belongs to the UPF0502 family.

The sequence is that of UPF0502 protein Reut_B4455 from Cupriavidus pinatubonensis (strain JMP 134 / LMG 1197) (Cupriavidus necator (strain JMP 134)).